The sequence spans 189 residues: ATP synthase subunit b (189 aa).

Residues 38–58 form a helical membrane-spanning segment; sequence PMFLATLIAFILVVLILWFLL.

Belongs to the ATPase B chain family. F-type ATPases have 2 components, F(1) - the catalytic core - and F(0) - the membrane proton channel. F(1) has five subunits: alpha(3), beta(3), gamma(1), delta(1), epsilon(1). F(0) has three main subunits: a(1), b(2) and c(10-14). The alpha and beta chains form an alternating ring which encloses part of the gamma chain. F(1) is attached to F(0) by a central stalk formed by the gamma and epsilon chains, while a peripheral stalk is formed by the delta and b chains.

It localises to the cell membrane. Functionally, f(1)F(0) ATP synthase produces ATP from ADP in the presence of a proton or sodium gradient. F-type ATPases consist of two structural domains, F(1) containing the extramembraneous catalytic core and F(0) containing the membrane proton channel, linked together by a central stalk and a peripheral stalk. During catalysis, ATP synthesis in the catalytic domain of F(1) is coupled via a rotary mechanism of the central stalk subunits to proton translocation. In terms of biological role, component of the F(0) channel, it forms part of the peripheral stalk, linking F(1) to F(0). This chain is ATP synthase subunit b, found in Mycoplasmopsis agalactiae (strain NCTC 10123 / CIP 59.7 / PG2) (Mycoplasma agalactiae).